The chain runs to 191 residues: Probable molybdenum cofactor guanylyltransferase (191 aa).

Residues L6–G8, K18, D67, and D92 each bind GTP. D92 is a Mg(2+) binding site.

Belongs to the MobA family. Mg(2+) is required as a cofactor.

It localises to the cytoplasm. The catalysed reaction is Mo-molybdopterin + GTP + H(+) = Mo-molybdopterin guanine dinucleotide + diphosphate. In terms of biological role, transfers a GMP moiety from GTP to Mo-molybdopterin (Mo-MPT) cofactor (Moco or molybdenum cofactor) to form Mo-molybdopterin guanine dinucleotide (Mo-MGD) cofactor. This Thermococcus gammatolerans (strain DSM 15229 / JCM 11827 / EJ3) protein is Probable molybdenum cofactor guanylyltransferase.